Consider the following 552-residue polypeptide: DNA ligase (552 aa).

Glu229 contacts ATP. Residue Lys231 is the N6-AMP-lysine intermediate of the active site. 2 residues coordinate ATP: Arg236 and Glu283. Glu283 and Glu377 together coordinate Mg(2+). The ATP site is built by Lys382 and Lys397.

The protein belongs to the ATP-dependent DNA ligase family. In terms of assembly, interacts with host TOP2A and TOP2B. It depends on Mg(2+) as a cofactor.

The protein localises to the host cytoplasm. It catalyses the reaction ATP + (deoxyribonucleotide)n-3'-hydroxyl + 5'-phospho-(deoxyribonucleotide)m = (deoxyribonucleotide)n+m + AMP + diphosphate.. Its function is as follows. DNA ligase that seals nicks in double-stranded DNA during DNA replication, DNA recombination and DNA repair. Recruits cellular topoisomerase II to sites of viral replication and assembly. The polypeptide is DNA ligase (OPG180) (Vaccinia virus (strain Ankara) (VACV)).